Consider the following 362-residue polypeptide: [LysW]-lysine hydrolase (362 aa).

Residue H69 coordinates Zn(2+). D71 is an active-site residue. D94 serves as a coordination point for Zn(2+). E127 acts as the Proton acceptor in catalysis. Zn(2+) contacts are provided by E128, E151, and H334.

Belongs to the peptidase M20A family. LysK subfamily. Zn(2+) is required as a cofactor. Requires Co(2+) as cofactor.

It localises to the cytoplasm. It catalyses the reaction [amino-group carrier protein]-C-terminal-gamma-(L-lysyl)-L-glutamate + H2O = [amino-group carrier protein]-C-terminal-L-glutamate + L-lysine. It participates in amino-acid biosynthesis; L-lysine biosynthesis via AAA pathway; L-lysine from L-alpha-aminoadipate (Thermus route): step 5/5. Functionally, catalyzes the release of L-lysine from [LysW]-gamma-L-lysine. The chain is [LysW]-lysine hydrolase from Deinococcus radiodurans (strain ATCC 13939 / DSM 20539 / JCM 16871 / CCUG 27074 / LMG 4051 / NBRC 15346 / NCIMB 9279 / VKM B-1422 / R1).